A 98-amino-acid polypeptide reads, in one-letter code: NADH-ubiquinone oxidoreductase chain 4L (98 aa).

The next 3 membrane-spanning stretches (helical) occupy residues 1–21, 26–46, and 59–79; these read MTTI…GVLI, LLST…LMAL, and APLI…ALLV.

It belongs to the complex I subunit 4L family. Core subunit of respiratory chain NADH dehydrogenase (Complex I) which is composed of 45 different subunits.

It is found in the mitochondrion inner membrane. The catalysed reaction is a ubiquinone + NADH + 5 H(+)(in) = a ubiquinol + NAD(+) + 4 H(+)(out). Its function is as follows. Core subunit of the mitochondrial membrane respiratory chain NADH dehydrogenase (Complex I) which catalyzes electron transfer from NADH through the respiratory chain, using ubiquinone as an electron acceptor. Part of the enzyme membrane arm which is embedded in the lipid bilayer and involved in proton translocation. The sequence is that of NADH-ubiquinone oxidoreductase chain 4L (MT-ND4L) from Rhyncholestes raphanurus (Chilean shrew opossum).